A 261-amino-acid polypeptide reads, in one-letter code: Cobalt transport protein CbiM (261 aa).

A signal peptide spans 1–33 (MLRRVLASKRASLILMGMLSFYIIVSASAPAYA). The next 7 helical transmembrane spans lie at 41 to 61 (LPAG…LLGV), 76 to 96 (LLLA…LPSV), 108 to 128 (LGSV…VLLF), 140 to 160 (TLGA…YWIY), 172 to 192 (IAIF…TSVQ), 197 to 217 (FPAP…IFAI), and 220 to 240 (IPLA…LQSY).

It belongs to the CbiM family. Forms an energy-coupling factor (ECF) transporter complex composed of an ATP-binding protein (A component, CbiO), a transmembrane protein (T component, CbiQ) and 2 possible substrate-capture proteins (S components, CbiM and CbiN) of unknown stoichimetry.

The protein localises to the cell inner membrane. It functions in the pathway cofactor biosynthesis; adenosylcobalamin biosynthesis. In terms of biological role, part of the energy-coupling factor (ECF) transporter complex CbiMNOQ involved in cobalt import. This is Cobalt transport protein CbiM from Nostoc sp. (strain PCC 7120 / SAG 25.82 / UTEX 2576).